We begin with the raw amino-acid sequence, 238 residues long: Large ribosomal subunit protein uL2 (238 aa).

Positions 201–238 are disordered; that stretch reads FGGGGHQHPGRPKTIARGTSPGRTVGHVAARQTGRSRK.

This sequence belongs to the universal ribosomal protein uL2 family. In terms of assembly, part of the 50S ribosomal subunit. Forms a bridge to the 30S subunit in the 70S ribosome.

Functionally, one of the primary rRNA binding proteins. Required for association of the 30S and 50S subunits to form the 70S ribosome, for tRNA binding and peptide bond formation. It has been suggested to have peptidyltransferase activity; this is somewhat controversial. Makes several contacts with the 16S rRNA in the 70S ribosome. This chain is Large ribosomal subunit protein uL2, found in Methanoregula boonei (strain DSM 21154 / JCM 14090 / 6A8).